Here is a 321-residue protein sequence, read N- to C-terminus: Meiotic drive suppressor wtf26 (321 aa).

Residues 29-68 (GLLPEYNSEEEGALPTYSDHARSSNPPNTHRENHSSGTTD) are disordered. 6 consecutive transmembrane segments (helical) span residues 73–93 (FLIK…LAVC), 110–130 (WTLF…LTYF), 151–171 (EMMI…FGCV), 188–208 (TISA…WTLW), 210–230 (ALSG…LVNG), and 243–263 (GYEI…LYEM).

Belongs to the WTF family. Homomer. Interacts with other proteins that exhibit high sequence similarity.

The protein resides in the spore membrane. It is found in the vacuole membrane. Its function is as follows. Acts as a suppressor component of the dual wtf meiotic drive system, and can suppress but not confer meiotic drive by compatible poisons. Wtf meiotic drive systems promote unequal transmission of alleles from the parental zygote to progeny spores by encoding a poison and an antidote from the same locus; the poison is trans-acting and forms toxic aggregates in all spores within an ascus, wherease the antidote is spore-specific and targets aggregates for degradation by the vacuole. Meiotic drive by wtf systems therefore lead to poisoning of all progeny that do not inherit the dual poison/antidote allele, or express a compatible antidote. This Schizosaccharomyces kambucha (Fission yeast) protein is Meiotic drive suppressor wtf26.